Reading from the N-terminus, the 110-residue chain is Small ribosomal subunit protein bS6 (110 aa).

It belongs to the bacterial ribosomal protein bS6 family.

Binds together with bS18 to 16S ribosomal RNA. The protein is Small ribosomal subunit protein bS6 (rpsF) of Aquifex aeolicus (strain VF5).